We begin with the raw amino-acid sequence, 92 residues long: MAAQTDYKKQVVGILLSLAFVLFVFSFSERHEKPLVEGKKQENWHTVVDKASVKIYGSRLVEENKLKQKLGHKQADSILTLLKLANEKHITL.

Residues 1 to 29 (MAAQTDYKKQVVGILLSLAFVLFVFSFSE) form the signal peptide.

This is an uncharacterized protein from Bacillus subtilis (strain 168).